A 522-amino-acid polypeptide reads, in one-letter code: Glutamate--cysteine ligase (522 aa).

This sequence belongs to the glutamate--cysteine ligase type 1 family. Type 1 subfamily.

It catalyses the reaction L-cysteine + L-glutamate + ATP = gamma-L-glutamyl-L-cysteine + ADP + phosphate + H(+). It functions in the pathway sulfur metabolism; glutathione biosynthesis; glutathione from L-cysteine and L-glutamate: step 1/2. The sequence is that of Glutamate--cysteine ligase from Vibrio parahaemolyticus serotype O3:K6 (strain RIMD 2210633).